A 283-amino-acid polypeptide reads, in one-letter code: 4-hydroxy-3-methylbut-2-enyl diphosphate reductase (283 aa).

Cys-12 serves as a coordination point for [4Fe-4S] cluster. His-40 and His-72 together coordinate (2E)-4-hydroxy-3-methylbut-2-enyl diphosphate. Dimethylallyl diphosphate is bound by residues His-40 and His-72. His-40 and His-72 together coordinate isopentenyl diphosphate. Cys-94 contacts [4Fe-4S] cluster. Residue His-122 coordinates (2E)-4-hydroxy-3-methylbut-2-enyl diphosphate. His-122 contacts dimethylallyl diphosphate. His-122 is a binding site for isopentenyl diphosphate. Residue Glu-124 is the Proton donor of the active site. Thr-160 contacts (2E)-4-hydroxy-3-methylbut-2-enyl diphosphate. Cys-188 is a [4Fe-4S] cluster binding site. Ser-216, Asn-218, and Ser-259 together coordinate (2E)-4-hydroxy-3-methylbut-2-enyl diphosphate. Ser-216, Asn-218, and Ser-259 together coordinate dimethylallyl diphosphate. Residues Ser-216, Asn-218, and Ser-259 each contribute to the isopentenyl diphosphate site.

Belongs to the IspH family. It depends on [4Fe-4S] cluster as a cofactor.

The enzyme catalyses isopentenyl diphosphate + 2 oxidized [2Fe-2S]-[ferredoxin] + H2O = (2E)-4-hydroxy-3-methylbut-2-enyl diphosphate + 2 reduced [2Fe-2S]-[ferredoxin] + 2 H(+). It catalyses the reaction dimethylallyl diphosphate + 2 oxidized [2Fe-2S]-[ferredoxin] + H2O = (2E)-4-hydroxy-3-methylbut-2-enyl diphosphate + 2 reduced [2Fe-2S]-[ferredoxin] + 2 H(+). The protein operates within isoprenoid biosynthesis; dimethylallyl diphosphate biosynthesis; dimethylallyl diphosphate from (2E)-4-hydroxy-3-methylbutenyl diphosphate: step 1/1. Its pathway is isoprenoid biosynthesis; isopentenyl diphosphate biosynthesis via DXP pathway; isopentenyl diphosphate from 1-deoxy-D-xylulose 5-phosphate: step 6/6. Catalyzes the conversion of 1-hydroxy-2-methyl-2-(E)-butenyl 4-diphosphate (HMBPP) into a mixture of isopentenyl diphosphate (IPP) and dimethylallyl diphosphate (DMAPP). Acts in the terminal step of the DOXP/MEP pathway for isoprenoid precursor biosynthesis. The chain is 4-hydroxy-3-methylbut-2-enyl diphosphate reductase from Dictyoglomus turgidum (strain DSM 6724 / Z-1310).